A 502-amino-acid chain; its full sequence is Aspartyl/glutamyl-tRNA(Asn/Gln) amidotransferase subunit B (502 aa).

The segment at 272–293 (TRHWHEDTRSTTSGRPKSDADD) is disordered.

Belongs to the GatB/GatE family. GatB subfamily. Heterotrimer of A, B and C subunits.

The enzyme catalyses L-glutamyl-tRNA(Gln) + L-glutamine + ATP + H2O = L-glutaminyl-tRNA(Gln) + L-glutamate + ADP + phosphate + H(+). The catalysed reaction is L-aspartyl-tRNA(Asn) + L-glutamine + ATP + H2O = L-asparaginyl-tRNA(Asn) + L-glutamate + ADP + phosphate + 2 H(+). Its function is as follows. Allows the formation of correctly charged Asn-tRNA(Asn) or Gln-tRNA(Gln) through the transamidation of misacylated Asp-tRNA(Asn) or Glu-tRNA(Gln) in organisms which lack either or both of asparaginyl-tRNA or glutaminyl-tRNA synthetases. The reaction takes place in the presence of glutamine and ATP through an activated phospho-Asp-tRNA(Asn) or phospho-Glu-tRNA(Gln). The sequence is that of Aspartyl/glutamyl-tRNA(Asn/Gln) amidotransferase subunit B from Paenarthrobacter aurescens (strain TC1).